A 436-amino-acid chain; its full sequence is Ribosomal protein uS12 methylthiotransferase RimO (436 aa).

Residues 2 to 114 (PNLYLVSLGC…IDEMILKKQN (113 aa)) enclose the MTTase N-terminal domain. Positions 11, 45, 77, 146, 150, and 153 each coordinate [4Fe-4S] cluster. A Radical SAM core domain is found at 132-363 (TGSSYHAYIK…IKKQIEGSFK (232 aa)). One can recognise a TRAM domain in the interval 363–434 (KSLVGEVIKV…KDKLIGEIIC (72 aa)).

The protein belongs to the methylthiotransferase family. RimO subfamily. [4Fe-4S] cluster serves as cofactor.

Its subcellular location is the cytoplasm. It catalyses the reaction L-aspartate(89)-[ribosomal protein uS12]-hydrogen + (sulfur carrier)-SH + AH2 + 2 S-adenosyl-L-methionine = 3-methylsulfanyl-L-aspartate(89)-[ribosomal protein uS12]-hydrogen + (sulfur carrier)-H + 5'-deoxyadenosine + L-methionine + A + S-adenosyl-L-homocysteine + 2 H(+). In terms of biological role, catalyzes the methylthiolation of an aspartic acid residue of ribosomal protein uS12. The polypeptide is Ribosomal protein uS12 methylthiotransferase RimO (Campylobacter fetus subsp. fetus (strain 82-40)).